The following is a 306-amino-acid chain: D-alanine--D-alanine ligase (306 aa).

Residues 102-300 form the ATP-grasp domain; the sequence is KIIAANAGVC…YGDIVQWMVE (199 aa). 128-183 contributes to the ATP binding site; that stretch reads PMEPPYVIKPVCEGSSFGVVIVQENEAVPPHNIGGSEWGYADEVMVEKYIPGRELT. Mg(2+) contacts are provided by Asp-253, Glu-267, and Asn-269.

It belongs to the D-alanine--D-alanine ligase family. It depends on Mg(2+) as a cofactor. Mn(2+) serves as cofactor.

It localises to the cytoplasm. It carries out the reaction 2 D-alanine + ATP = D-alanyl-D-alanine + ADP + phosphate + H(+). It participates in cell wall biogenesis; peptidoglycan biosynthesis. Functionally, cell wall formation. In Bartonella tribocorum (strain CIP 105476 / IBS 506), this protein is D-alanine--D-alanine ligase.